A 461-amino-acid chain; its full sequence is Cyclic AMP-responsive element-binding protein 3-like protein 3 (461 aa).

Topologically, residues 1-322 (MNTDLAAGKM…STSKSAQTGT (322 aa)) are cytoplasmic. The segment at 51 to 120 (DQQVLPNPDS…AGCHPAQPGK (70 aa)) is disordered. Over residues 63 to 85 (FLSSILGSGDSLPSSPLWSPEGS) the composition is skewed to low complexity. Ser173 bears the Phosphoserine mark. In terms of domain architecture, bZIP spans 243 to 306 (VLKKIRRKIR…LSLLEQLKKL (64 aa)). The tract at residues 245 to 274 (KKIRRKIRNKQSAQESRKKKKEYIDGLETR) is basic motif. The segment at 285 to 306 (LQRKVLHLEKQNLSLLEQLKKL) is leucine-zipper. Lys294 participates in a covalent cross-link: Glycyl lysine isopeptide (Lys-Gly) (interchain with G-Cter in ubiquitin). Residues 323-343 (CVAVLLLSFALIILPSISPFG) form a helical; Signal-anchor for type II membrane protein membrane-spanning segment. The Lumenal segment spans residues 344–461 (PNKTESPGDF…AGLEAAGDEL (118 aa)). A disordered region spans residues 370 to 408 (RVAADAVPGSEAPGPRPEADTTREESPGSPGADWGFQDT). An O-linked (GalNAc...) serine glycan is attached at Ser379. Residues 386 to 395 (PEADTTREES) are compositionally biased toward basic and acidic residues. Residues Asn410, Asn413, Asn420, and Asn427 are each glycosylated (N-linked (GlcNAc...) asparagine). The disordered stretch occupies residues 442 to 461 (APGPSTGSGRAGLEAAGDEL).

It belongs to the bZIP family. ATF subfamily. Binds DNA as a dimer. May form homodimers. Interacts with ATF6. Interacts with SYNV1/HRD1; this interaction leads to CREB3L3 ubiquitination and proteasomal degradation. Controlled by regulated intramembrane proteolysis (RIP). Following ER stress a fragment containing the cytoplasmic transcription factor domain is released by proteolysis. The cleavage seems to be performed sequentially by site-1 and site-2 proteases (PS1 and PS2). In terms of processing, N- and O-glycosylated. N-glycosylation is required for optimal proteolytic activation. O-glycosylated with core 1 or possibly core 8 glycans. Post-translationally, ubiquitinated at Lys-294 by SYNV1/HRD1 via 'Lys-27'-linked ubiquitin. Exclusively expressed in liver. Underexpressed in hepatocellular carcinoma tissues.

It localises to the endoplasmic reticulum membrane. The protein resides in the nucleus. Its function is as follows. Transcription factor that may act during endoplasmic reticulum stress by activating unfolded protein response target genes. Activated in response to cAMP stimulation. In vitro, binds to the cAMP response element (CRE) and box-B element. Activates transcription through box-B element. Activates transcription through CRE. May function synergistically with ATF6. In acute inflammatory response, may activate expression of acute phase response (APR) genes. May be involved in growth suppression. Regulates FGF21 transcription. Plays a crucial role in the regulation of triglyceride metabolism and is required for the maintenance of normal plasma triglyceride concentrations. The sequence is that of Cyclic AMP-responsive element-binding protein 3-like protein 3 (CREB3L3) from Homo sapiens (Human).